Here is a 293-residue protein sequence, read N- to C-terminus: 4-hydroxy-tetrahydrodipicolinate synthase (293 aa).

Thr46 is a binding site for pyruvate. The active-site Proton donor/acceptor is the Tyr133. Lys161 acts as the Schiff-base intermediate with substrate in catalysis. Val202 contributes to the pyruvate binding site.

It belongs to the DapA family. In terms of assembly, homotetramer; dimer of dimers.

It is found in the cytoplasm. It catalyses the reaction L-aspartate 4-semialdehyde + pyruvate = (2S,4S)-4-hydroxy-2,3,4,5-tetrahydrodipicolinate + H2O + H(+). The protein operates within amino-acid biosynthesis; L-lysine biosynthesis via DAP pathway; (S)-tetrahydrodipicolinate from L-aspartate: step 3/4. Catalyzes the condensation of (S)-aspartate-beta-semialdehyde [(S)-ASA] and pyruvate to 4-hydroxy-tetrahydrodipicolinate (HTPA). The chain is 4-hydroxy-tetrahydrodipicolinate synthase from Wolbachia pipientis subsp. Culex pipiens (strain wPip).